Reading from the N-terminus, the 111-residue chain is Nucleoid-associated protein Ppha_1174 (111 aa).

This sequence belongs to the YbaB/EbfC family. Homodimer.

Its subcellular location is the cytoplasm. It localises to the nucleoid. Binds to DNA and alters its conformation. May be involved in regulation of gene expression, nucleoid organization and DNA protection. This Pelodictyon phaeoclathratiforme (strain DSM 5477 / BU-1) protein is Nucleoid-associated protein Ppha_1174.